Here is a 1207-residue protein sequence, read N- to C-terminus: MALKMVKGSIDRMFDKNLQDLVRGIRNHKEDEAKYISQCIDEIKQELKQDNIAVKANAVCKLTYLQMLGYDISWAAFNIIEVMSASKFTFKRIGYLAASQCFHEGTDVIMLTTNQIRKDLSSPSQYDTGVALTGLSCFVTPDLARDLANDIMTLMSHTKPYIRKKAVLIMYKVFLKYPESLRPAFPRLKEKLEDPDPGVQSAAVNVICELARRNPKNYLSLAPLFFKLMTSSTNNWVLIKIIKLFGALTPLEPRLGKKLIEPLTNLIHSTSAMSLLYECVNTVIAVLISLSSGMPNHSASIQLCVQKLRILIEDSDQNLKYLGLLAMSKILRTHPKSVQAHKDLVLQCLDDKDESIRLRALDLLYGMVSKKNLMEIVKKLMTHVDKAEGTTYRDELLTKIIDICSQSNYQHITNFEWYISILVELTRLEGTRHGHLIAAQMLDVAIRVKAIRRFAVAQMSALLDSAHLVASSPQRSGICEVLYAAAWICGEFSEHLQEPQQTLEAMLRPKVTTLPGHIQAVYVQNVVKLYAAILQQKEQAADTSAAQEVTQLLVERLPQFVQSADLEVQERASCILQLVKHVQKLQAKDVPVAEEVSALFAGELNPVAPKAQKKVPVPEGLDLDAWINEPLSDSESEDEKPKAMFQDEEQRHTKPRAPEADEQELARRREARRQEQANNPFYIKSSPSPQKRYQDAPGVEHIPVVQIDLSVPLKVPGMPLSDQYVKLEEERRHRQRLEKDKRKKKKRERERRGTRRHSSLHTESDEDIAPAQRVDIVTEEMPENALPSDEDDKDPNDPYRALDIDLDKPLADSEKLPVQKHRNAETSKSPEKEDVPLVEKKSKKPKKKEKKHKEKEREKKKKEVEKGEDLDFWLSTTPPAATPALEELEVNTTVTVLKEGQEEPRGEEQDAEEDREQDLEKKPSKHKKKKHKKDKEERPKDKRKSKKKVPPADEEAAEPVENGTLEEEPLPPMSSYILLAENSYIKMTYDVQGSLQKDSQVTVSVVLENQSDSFLKSMELNVLDSLNARLARPEGSSVHDGVPVPFQLPPGISNEAQFVFTIQSIVMAQKLKGTLSFIAKNDEGSTHEKLDFKLHFTCTSYLVTTPCYSDAFAKLLESGDLSMSSIKVDGISMSFHNLLAKICFHHRFSVVERVDSCASMYSRSIQGHHVCLLVKKGEKSVSVDGKCSDPTLLSNLLEEMKETLATC.

At A2 the chain carries N-acetylalanine. 9 HEAT repeats span residues 34 to 71 (KYIS…LGYD), 142 to 179 (DLAR…KYPE), 180 to 216 (SLRP…RNPK), 218 to 254 (YLSL…LEPR), 257 to 296 (KKLI…GMPN), 298 to 336 (SASI…THPK), 337 to 373 (SVQA…KKNL), 375 to 409 (EIVK…QSNY), and 521 to 558 (VYVQ…ERLP). Disordered regions lie at residues 630-695 (PLSD…RYQD) and 731-970 (RRHR…EEPL). 3 positions are modified to phosphoserine: S632, S634, and S636. Residues 648–675 (EEQRHTKPRAPEADEQELARRREARRQE) are compositionally biased toward basic and acidic residues. The stretch at 659-679 (EADEQELARRREARRQEQANN) forms a coiled coil. A Phosphoserine modification is found at S688. The stretch at 725–752 (VKLEEERRHRQRLEKDKRKKKKRERERR) forms a coiled coil. Positions 731 to 740 (RRHRQRLEKD) are enriched in basic and acidic residues. Positions 741-759 (KRKKKKRERERRGTRRHSS) are enriched in basic residues. Phosphoserine occurs at positions 758 and 759. T762 carries the post-translational modification Phosphothreonine. A phosphoserine mark is found at S764, S788, and S829. A compositionally biased stretch (acidic residues) spans 777 to 794 (VTEEMPENALPSDEDDKD). Residues 795-840 (PNDPYRALDIDLDKPLADSEKLPVQKHRNAETSKSPEKEDVPLVEK) show a composition bias toward basic and acidic residues. A compositionally biased stretch (basic residues) spans 841-854 (KSKKPKKKEKKHKE). The stretch at 846–870 (KKKEKKHKEKEREKKKKEVEKGEDL) forms a coiled coil. Basic and acidic residues-rich tracts occupy residues 855–869 (KERE…KGED) and 899–908 (EGQEEPRGEE). The span at 923–933 (PSKHKKKKHKK) shows a compositional bias: basic residues. A compositionally biased stretch (acidic residues) spans 952–969 (ADEEAAEPVENGTLEEEP).

The protein belongs to the adaptor complexes large subunit family. AP-3 associates with the BLOC-1 complex. Adaptor protein complex 3 (AP-3) is a heterotetramer composed of two large adaptins (delta-type subunit AP3D1 and beta-type subunit AP3B1 or AP3B2), a medium adaptin (mu-type subunit AP3M1 or AP3M2) and a small adaptin (sigma-type subunit APS1 or AP3S2). Interacts with SLC30A2. Interacts with CLN3 (via dileucine motif); this interaction facilitates lysosomal targeting.

The protein localises to the cytoplasm. The protein resides in the golgi apparatus membrane. Its function is as follows. Part of the AP-3 complex, an adaptor-related complex which is not clathrin-associated. The complex is associated with the Golgi region as well as more peripheral structures. It facilitates the budding of vesicles from the Golgi membrane and may be directly involved in trafficking to lysosomes. Involved in process of CD8+ T-cell and NK cell degranulation. In concert with the BLOC-1 complex, AP-3 is required to target cargos into vesicles assembled at cell bodies for delivery into neurites and nerve terminals. The chain is AP-3 complex subunit delta-1 (AP3D1) from Bos taurus (Bovine).